Consider the following 1136-residue polypeptide: Phytochrome (1136 aa).

The segment at methionine 1–valine 28 is disordered. The span at histidine 11–arginine 20 shows a compositional bias: low complexity. A GAF domain is found at aspartate 231–valine 414. Cysteine 336 lines the phytochromobilin pocket. 2 PAS domains span residues valine 629 to glutamate 699 and aspartate 762 to arginine 833. A Histidine kinase domain is found at tyrosine 913–glutamine 1132.

It belongs to the phytochrome family. Homodimer. Post-translationally, contains one covalently linked phytochromobilin chromophore.

Functionally, regulatory photoreceptor which exists in two forms that are reversibly interconvertible by light: the Pr form that absorbs maximally in the red region of the spectrum and the Pfr form that absorbs maximally in the far-red region. Photoconversion of Pr to Pfr induces an array of morphogenic responses, whereas reconversion of Pfr to Pr cancels the induction of those responses. Pfr controls the expression of a number of nuclear genes including those encoding the small subunit of ribulose-bisphosphate carboxylase, chlorophyll A/B binding protein, protochlorophyllide reductase, rRNA, etc. It also controls the expression of its own gene(s) in a negative feedback fashion. This is Phytochrome from Picea abies (Norway spruce).